Here is a 311-residue protein sequence, read N- to C-terminus: MTRLIFMGTPQFSATVLQGLLEKPAYDILAVVTQPDRAVGRKKDITMTPVKKLALAHQLPVFQPEKLSGSQELADIMALGADGIVTAAFGQFLPTVLLDSVTFAVNVHASLLPKYRGGAPIHYAIINGDKEAGVTIMEMVKEMDAGDMISSASLPILDTDNVGTMFDKLAILGRDLLLKTLPDYLSGDLKPVPQDHSQATFSPNLSAEEERLDWSKPAREVFNHIRGMNPWPVAHTLLDGQRFKIYEAELAEGSGSAGQIIAKTKKALVVAAGEGALSLTLVQPAGKPKMPIVDFLNGIGRSLEVGDVLGE.

Ser-110–Pro-113 serves as a coordination point for (6S)-5,6,7,8-tetrahydrofolate.

The protein belongs to the Fmt family.

The catalysed reaction is L-methionyl-tRNA(fMet) + (6R)-10-formyltetrahydrofolate = N-formyl-L-methionyl-tRNA(fMet) + (6S)-5,6,7,8-tetrahydrofolate + H(+). Functionally, attaches a formyl group to the free amino group of methionyl-tRNA(fMet). The formyl group appears to play a dual role in the initiator identity of N-formylmethionyl-tRNA by promoting its recognition by IF2 and preventing the misappropriation of this tRNA by the elongation apparatus. The protein is Methionyl-tRNA formyltransferase of Streptococcus equi subsp. equi (strain 4047).